A 421-amino-acid polypeptide reads, in one-letter code: Enolase (421 aa).

Residue Gln162 coordinates (2R)-2-phosphoglycerate. Glu204 serves as the catalytic Proton donor. Positions 241, 284, and 311 each coordinate Mg(2+). 4 residues coordinate (2R)-2-phosphoglycerate: Lys336, Arg365, Ser366, and Lys387. The Proton acceptor role is filled by Lys336.

The protein belongs to the enolase family. Requires Mg(2+) as cofactor.

It is found in the cytoplasm. Its subcellular location is the secreted. The protein localises to the cell surface. The enzyme catalyses (2R)-2-phosphoglycerate = phosphoenolpyruvate + H2O. The protein operates within carbohydrate degradation; glycolysis; pyruvate from D-glyceraldehyde 3-phosphate: step 4/5. Its function is as follows. Catalyzes the reversible conversion of 2-phosphoglycerate (2-PG) into phosphoenolpyruvate (PEP). It is essential for the degradation of carbohydrates via glycolysis. This chain is Enolase, found in Nitratiruptor sp. (strain SB155-2).